We begin with the raw amino-acid sequence, 345 residues long: NADH-quinone oxidoreductase subunit H (345 aa).

8 helical membrane passes run 13 to 33 (VLIL…LLFL), 84 to 104 (FMLA…VIPF), 115 to 135 (VAIL…IMGG), 161 to 181 (LGLI…GGIV), 190 to 210 (FFSW…ISCL), 248 to 268 (YIAI…GWLS), 277 to 297 (VFWM…VKAI), and 309 to 329 (LGWK…AFAA).

This sequence belongs to the complex I subunit 1 family. As to quaternary structure, NDH-1 is composed of 14 different subunits. Subunits NuoA, H, J, K, L, M, N constitute the membrane sector of the complex.

Its subcellular location is the cell inner membrane. It carries out the reaction a quinone + NADH + 5 H(+)(in) = a quinol + NAD(+) + 4 H(+)(out). NDH-1 shuttles electrons from NADH, via FMN and iron-sulfur (Fe-S) centers, to quinones in the respiratory chain. The immediate electron acceptor for the enzyme in this species is believed to be ubiquinone. Couples the redox reaction to proton translocation (for every two electrons transferred, four hydrogen ions are translocated across the cytoplasmic membrane), and thus conserves the redox energy in a proton gradient. This subunit may bind ubiquinone. This Roseobacter denitrificans (strain ATCC 33942 / OCh 114) (Erythrobacter sp. (strain OCh 114)) protein is NADH-quinone oxidoreductase subunit H.